A 408-amino-acid polypeptide reads, in one-letter code: Sex comb on midleg-like protein 4 (408 aa).

Phosphoserine occurs at positions 55 and 65. A disordered region spans residues 274 to 338; sequence AGGPATTTSG…TRRPSSRNPS (65 aa). Residues 278–287 are compositionally biased toward polar residues; sequence ATTTSGSRTN. Residues 288-306 show a composition bias toward low complexity; that stretch reads PVPSGGSSSPGLRLPASSP. The SAM domain occupies 340–406; that stretch reads WTVEDVVRFV…CYHIDKLKQA (67 aa).

The protein belongs to the SCM family.

Its subcellular location is the nucleus. Its function is as follows. Putative Polycomb group (PcG) protein. PcG proteins act by forming multiprotein complexes, which are required to maintain the transcriptionally repressive state of homeotic genes throughout development. This chain is Sex comb on midleg-like protein 4 (Scml4), found in Mus musculus (Mouse).